Consider the following 36-residue polypeptide: Serum amyloid P-component (36 aa).

One can recognise a Pentraxin (PTX) domain in the interval 6-36; it reads SGKVFVIPMATSTSHVKLHARVSEPISAMTM.

This sequence belongs to the pentraxin family. Homopentamer. Discoid arrangement of 5 covalently bound subunits. Requires Ca(2+) as cofactor.

Its subcellular location is the secreted. The protein is Serum amyloid P-component of Salmo salar (Atlantic salmon).